Here is a 90-residue protein sequence, read N- to C-terminus: Barrier-to-autointegration factor (90 aa).

Phosphoserine occurs at positions 2 and 3. The residue at position 4 (T4) is a Phosphothreonine. A Phosphoserine modification is found at S5.

Belongs to the BAF family. In terms of assembly, homodimer.

The protein resides in the nucleus. Its subcellular location is the chromosome. The protein localises to the nucleus envelope. It is found in the cytoplasm. Functionally, non-specific DNA-binding protein that plays key roles in mitotic nuclear reassembly, chromatin organization, DNA damage response, gene expression and intrinsic immunity against foreign DNA. Contains two non-specific double-stranded DNA (dsDNA)-binding sites which promote DNA cross-bridging. Plays a key role in nuclear membrane reformation at the end of mitosis by driving formation of a single nucleus in a spindle-independent manner. Transiently cross-bridges anaphase chromosomes via its ability to bridge distant DNA sites, leading to the formation of a dense chromatin network at the chromosome ensemble surface that limits membranes to the surface. Also acts as a negative regulator of innate immune activation by restricting CGAS activity toward self-DNA upon acute loss of nuclear membrane integrity. Outcompetes CGAS for DNA-binding, thereby preventing CGAS activation and subsequent damaging autoinflammatory responses. Also involved in DNA damage response; acts by inhibiting the ADP-ribosyltransferase activity of PARP1. Involved in the recognition of exogenous dsDNA in the cytosol: associates with exogenous dsDNA immediately after its appearance in the cytosol at endosome breakdown and is required to avoid autophagy. The protein is Barrier-to-autointegration factor (banf1) of Danio rerio (Zebrafish).